The chain runs to 3477 residues: Abnormal spindle-like microcephaly-associated protein (3477 aa).

The disordered stretch occupies residues 1–30 (MANRRVGRGCWEVSPTERRPPAGLRGPAAE). A phosphoserine mark is found at Ser280, Ser283, Ser367, and Ser392. The sufficient for interaction with KATNA1:KATNB1 stretch occupies residues 308–409 (ITQSQIHFLS…NMAYMCTSQQ (102 aa)). Polar residues predominate over residues 415 to 424 (LSNENSQVPQ). Disordered stretches follow at residues 415–443 (LSNE…ECQG) and 559–581 (KNEV…DGSM). Ser425 carries the phosphoserine modification. Residues 560 to 570 (NEVTPSSTTAS) are compositionally biased toward polar residues. At Ser605 the chain carries Phosphoserine. The Calponin-homology (CH) 1 domain maps to 920-1056 (KASKEILLAF…LLWKIAFAFQ (137 aa)). A coiled-coil region spans residues 1057–1078 (VDISLNLDQLKEEIAFLKHTKS). Ser1103 bears the Phosphoserine mark. The Calponin-homology (CH) 2 domain maps to 1110–1261 (SENIKLLMDW…YLSFLCARLL (152 aa)). IQ domains lie at 1347 to 1378 (QNKA…IILQ), 1393 to 1422 (YLWA…MLKS), 1582 to 1613 (LKKT…VIIQ), 1632 to 1661 (TRSA…SVIK), 1655 to 1684 (ILTS…ATIK), 1728 to 1757 (MRES…AVIS), 1751 to 1782 (QRKA…IVIQ), 1801 to 1830 (VKKA…AALK), 1824 to 1853 (QSIA…SIIK), 1874 to 1903 (TKAA…AALK), 1897 to 1928 (EHQA…LVIQ), 1947 to 1978 (LRHA…IIIQ), 1970 to 2001 (QHKC…LLIQ), 2020 to 2049 (TKAA…AAVT), 2043 to 2074 (CNKA…IIIQ), 2093 to 2124 (LKKT…TFIK), 2116 to 2147 (MHRA…IVIQ), 2166 to 2197 (ILKA…TLIQ), 2189 to 2218 (MQTA…ITKT), 2239 to 2270 (LRHS…TLIQ), 2262 to 2293 (MHIA…ILIQ), 2311 to 2342 (VQNA…TFIQ), 2334 to 2365 (MHRA…VVIQ), 2384 to 2415 (QRHS…TLIQ), 2407 to 2438 (MHSS…IFVQ), 2457 to 2488 (LRKA…VLIQ), 2530 to 2561 (QWHS…IVIQ), 2624 to 2653 (QHQA…TVVS), 2665 to 2696 (RTQA…TLIQ), 2688 to 2719 (MHRA…VVIQ), 2738 to 2767 (VQKS…EKMA), 2859 to 2890 (QKRA…VVLQ), 2909 to 2938 (IRSS…STIK), 2932 to 2963 (IKNS…KIQA), 2954 to 2985 (KVKA…KIIQ), 3029 to 3060 (RHRA…LIIQ), 3079 to 3110 (FKKS…RLLH), 3181 to 3210 (RNRA…GIIK), and 3204 to 3235 (FTSG…IRLS).

In terms of assembly, interacts with KATNA1 and KATNB1; katanin complex formation KATNA1:KATNB1 is required for the association.

It is found in the cytoplasm. The protein resides in the cytoskeleton. The protein localises to the spindle. It localises to the nucleus. In terms of biological role, involved in mitotic spindle regulation and coordination of mitotic processes. The function in regulating microtubule dynamics at spindle poles including spindle orientation, astral microtubule density and poleward microtubule flux seems to depend on the association with the katanin complex formed by KATNA1 and KATNB1. Enhances the microtubule lattice severing activity of KATNA1 by recruiting the katanin complex to microtubules. Can block microtubule minus-end growth and reversely this function can be enhanced by the katanin complex. May have a preferential role in regulating neurogenesis. This is Abnormal spindle-like microcephaly-associated protein (ASPM) from Homo sapiens (Human).